A 221-amino-acid chain; its full sequence is GFP-like non-fluorescent chromoprotein (221 aa).

The segment at residues 62-64 (QYG) is a cross-link (2-iminomethyl-5-imidazolinone (Gln-Gly)). (E)-2,3-didehydrotyrosine is present on Tyr63.

It belongs to the GFP family. As to quaternary structure, homotetramer. Contains a chromophore consisting of modified amino acid residues. The chromophore is formed by autocatalytic backbone condensation between Xaa-N and Gly-(N+2), oxidation of Tyr-(N+1) to didehydrotyrosine, and formation of a double bond to the alpha-amino nitrogen of residue Xaa-N. Maturation of the chromophore requires nothing other than molecular oxygen.

Its function is as follows. Thought to play a role in photoprotection of the coral's resident symbiont microalgae's photosystems from photoinhibition caused by high light levels found near the surface of coral reefs. The polypeptide is GFP-like non-fluorescent chromoprotein (Montipora efflorescens (Pore coral)).